Here is a 247-residue protein sequence, read N- to C-terminus: MKFDILTLFPAMFDGPLTESILKRAAEKGLIEVKLHNIRDFAFDRHSVTDDYPYGGGAGMVMKVEPLAACIEHAKVGSPRARVILTTPRGRSFNHAVAEELAREEALIIICGRYEGVDERVRELFVDDEISIGDFVLTGGEMAAMVLVDAVSRFVPGVLGSDESAVNDSFADGLLEYPQYTRPAEFRGLGVPSVLLSGNHQEIAKWRRRQSLGRTAASRPDLLTDAHLSASDREYLEELQRVAGSDG.

S-adenosyl-L-methionine contacts are provided by residues Gly112 and 132–137 (IGDFVL).

This sequence belongs to the RNA methyltransferase TrmD family. In terms of assembly, homodimer.

The protein localises to the cytoplasm. The enzyme catalyses guanosine(37) in tRNA + S-adenosyl-L-methionine = N(1)-methylguanosine(37) in tRNA + S-adenosyl-L-homocysteine + H(+). In terms of biological role, specifically methylates guanosine-37 in various tRNAs. The polypeptide is tRNA (guanine-N(1)-)-methyltransferase (Geotalea uraniireducens (strain Rf4) (Geobacter uraniireducens)).